The primary structure comprises 236 residues: NLP effector protein 3 (236 aa).

An N-terminal signal peptide occupies residues 1–19; the sequence is MNLLGFLAVVALSTASVQA. Positions 103-113 match the Conserved undecapeptide motif I motif; that stretch reads AIMYSWYFPKD. The Hepta-peptide GHRHDWE motif II motif lies at 120-126; sequence GHRHDWE.

Belongs to the Necrosis inducing protein (NPP1) family.

It is found in the secreted. Functionally, secreted effector that contributes to virulence during infection by P.capsici. Induces distinct chlorosis at 3 days after inoculation of host C.annuum leaves, and all the chlorotic areas gradually turn brown and become moderately necrotic at 7 days after inoculation. Leads only to chlorotic areas, without necrosis at 7 days after non-host N.benthamiana leaves infection. Induces cell death in hot pepper. The sequence is that of NLP effector protein 3 from Phytophthora capsici.